The sequence spans 218 residues: 25 kDa calcium-binding protein (218 aa).

EF-hand domains lie at glycine 24–serine 59, proline 66–glycine 101, alanine 128–glutamate 163, and proline 171–lysine 206. 17 residues coordinate Ca(2+): aspartate 37, arginine 43, aspartate 48, aspartate 79, asparagine 81, aspartate 83, aspartate 90, aspartate 141, aspartate 143, serine 145, glutamine 147, glutamate 152, aspartate 184, asparagine 186, aspartate 188, serine 190, and glutamate 195.

Expected to play a crucial role in calcium-dependent regulation of ciliary movement. The polypeptide is 25 kDa calcium-binding protein (Tetrahymena thermophila).